We begin with the raw amino-acid sequence, 515 residues long: Na(+)/H(+) antiporter NhaB (515 aa).

13 helical membrane-spanning segments follow: residues 23–43, 44–64, 88–108, 119–139, 143–163, 202–222, 238–258, 303–323, 324–344, 357–377, 389–409, 447–467, and 477–497; these read IIVFLILNPILYFLISPFIAG, WCLVIEFIFTLAMALKCYPLQ, IMASFEVILLLMFMVAGIYFM, LLITVRSKIVLSLSFCLSAAF, FLDALTVVAVIISVVMGFYGV, LMMHAGVGTALGGVMTLVGEP, FFIRMAPVTVPVLICGLITCV, GIIGIWLVCGLAFHLAAVGLI, GLSVIVLTTAFCGITSESTIG, LVVFFSVVAVIIDQHLFGPII, LLLFYGFNGLLSAISDNVFVA, ATPNGQAAFLFLLTSSLAPLI, and MALPYTIVLTVVGLLAVEYIL.

It belongs to the NhaB Na(+)/H(+) (TC 2.A.34) antiporter family.

Its subcellular location is the cell inner membrane. It catalyses the reaction 2 Na(+)(in) + 3 H(+)(out) = 2 Na(+)(out) + 3 H(+)(in). Na(+)/H(+) antiporter that extrudes sodium in exchange for external protons. In Mannheimia succiniciproducens (strain KCTC 0769BP / MBEL55E), this protein is Na(+)/H(+) antiporter NhaB.